The following is a 207-amino-acid chain: Microtubule-associated protein Jupiter (207 aa).

The residue at position 30 (S30) is a Phosphoserine. 2 positions are modified to phosphothreonine: T41 and T102. Phosphoserine occurs at positions 111, 138, and 149. Disordered regions lie at residues 129–174 (KGKY…YKAG) and 188–207 (GNQV…SGLW). A compositionally biased stretch (low complexity) spans 136–149 (SGSVSSASSSVSSS). Positions 150-164 (TENLKINVGNRSDGN) are enriched in polar residues.

The protein belongs to the MAP Jupiter family.

It localises to the nucleus. Its subcellular location is the cytoplasm. The protein resides in the cytoskeleton. The protein localises to the spindle. Binds to all microtubule populations. The chain is Microtubule-associated protein Jupiter from Drosophila grimshawi (Hawaiian fruit fly).